We begin with the raw amino-acid sequence, 882 residues long: MTDVTIKTLAAERQTSVERLVQQFADAGIRKSADDSVSAQEKQTLIDHLNQKNSGPDKLTLQRKTRSTLNIPGTGGKSKSVQIEVRKKRTFVKRDPQEAERLAAEEQARREAEESAKREAQQKAEREAAEQAKREAAEQAKREAAEKDKVSNQQDDMTKNAQAEKARREQEAAELKRKAEEEARRKLEEEARRVAEEARRMAEENKWTDNAEPTEDSSDYHVTTSQHARQAEDESDREVEGGRGRGRNAKAARPKKGNKHAESKADREEARAAVRGGKGGKRKGSSLQQGFQKPAQAVNRDVVIGETITVGELANKMAVKGSQVIKAMMKLGAMATINQVIDQETAQLVAEEMGHKVILRRENELEEAVMSDRDTGAAAEPRAPVVTIMGHVDHGKTSLLDYIRSTKVASGEAGGITQHIGAYHVETENGMITFLDTPGHAAFTSMRARGAQATDIVVLVVAADDGVMPQTIEAIQHAKAAQVPVVVAVNKIDKPEADPDRVKNELSQYGILPEEWGGESQFVHVSAKAGTGIDELLDAILLQAEVLELKAVRKGMASGAVIESFLDKGRGPVATVLVREGTLHKGDIVLCGFEYGRVRAMRNELGQEVLEAGPSIPVEILGLSGVPAAGDEVTVVRDEKKAREVALYRQGKFREVKLARQQKSKLENMFANMTEGEVHEVNIVLKADVQGSVEAISDSLLKLSTDEVKVKIIGSGVGGITETDATLAAASNAILVGFNVRADASARKVIEAESLDLRYYSVIYNLIDEVKAAMSGMLSPELKQQIIGLAEVRDVFKSPKFGAIAGCMVTEGVVKRHNPIRVLRDNVVIYEGELESLRRFKDDVNEVRNGMECGIGVKNYNDVRTGDVIEVFEIIEIQRTIA.

The interval 28-296 (GIRKSADDSV…LQQGFQKPAQ (269 aa)) is disordered. Over residues 67–81 (STLNIPGTGGKSKSV) the composition is skewed to polar residues. Basic and acidic residues predominate over residues 92–209 (VKRDPQEAER…RMAEENKWTD (118 aa)). Over residues 244–258 (GRGRNAKAARPKKGN) the composition is skewed to basic residues. The segment covering 259–272 (KHAESKADREEARA) has biased composition (basic and acidic residues). The 170-residue stretch at 381 to 550 (PRAPVVTIMG…LLQAEVLELK (170 aa)) folds into the tr-type G domain. The segment at 390–397 (GHVDHGKT) is G1. GTP is bound at residue 390 to 397 (GHVDHGKT). Residues 415-419 (GITQH) form a G2 region. Residues 436 to 439 (DTPG) form a G3 region. GTP contacts are provided by residues 436 to 440 (DTPGH) and 490 to 493 (NKID). The tract at residues 490–493 (NKID) is G4. The segment at 526 to 528 (SAK) is G5. Lysine 800 is modified (N6-acetyllysine).

It belongs to the TRAFAC class translation factor GTPase superfamily. Classic translation factor GTPase family. IF-2 subfamily.

The protein localises to the cytoplasm. Its function is as follows. One of the essential components for the initiation of protein synthesis. Protects formylmethionyl-tRNA from spontaneous hydrolysis and promotes its binding to the 30S ribosomal subunits. Also involved in the hydrolysis of GTP during the formation of the 70S ribosomal complex. This is Translation initiation factor IF-2 from Shigella boydii serotype 4 (strain Sb227).